A 662-amino-acid polypeptide reads, in one-letter code: 72 kDa type IV collagenase (662 aa).

The first 29 residues, 1–29 (MEARVAWGALAGPLRVLCVLCCLLGRAIA), serve as a signal peptide directing secretion. Residues 30 to 109 (APSPIIKFPG…PRCGNPDVAN (80 aa)) constitute a propeptide, activation peptide. A Cysteine switch motif is present at residues 100 to 107 (PRCGNPDV). Cys102 contacts Zn(2+). The interval 110–221 (YNFFPRKPKW…LWTLGEGQVV (112 aa)) is collagenase-like 1. Ca(2+) is bound by residues Asp134 and Asp168. Residues His178 and Asp180 each coordinate Zn(2+). 2 residues coordinate Ca(2+): Asp185 and Gly186. His193 provides a ligand contact to Zn(2+). Ca(2+) is bound by residues Gly200, Gly202, and Asp204. His206 is a Zn(2+) binding site. Ca(2+) contacts are provided by Asp208, Asp209, and Glu211. The tract at residues 222-396 (RVKYGNADGE…WGFCPDQGYS (175 aa)) is collagen-binding. 3 Fibronectin type-II domains span residues 228–276 (ADGE…FCPH), 286–334 (ADGQ…FCPE), and 344–392 (SEGA…FCPD). Cystine bridges form between Cys233–Cys259, Cys247–Cys274, Cys291–Cys317, Cys305–Cys332, Cys349–Cys375, and Cys363–Cys390. Positions 397–467 (LFLVAAHEFG…GPTPTLGPVT (71 aa)) are collagenase-like 2. His403 serves as a coordination point for Zn(2+). Glu404 is a catalytic residue. Zn(2+) contacts are provided by His407 and His413. The interval 414–662 (SQDPGALMAP…GSIKSDWLGC (249 aa)) is required for inhibitor TIMP2 binding. Residues 446-465 (GPSPDADTDTGTGPTPTLGP) are disordered. The cysteines at positions 471 and 662 are disulfide-linked. Hemopexin repeat units follow at residues 474-518 (DIVF…WPEL), 519-565 (PEKI…GLPP), 567-615 (VQQV…WNAI), and 616-662 (PDNL…WLGC). Ca(2+) is bound by residues Asp478, Asp523, and Asp571. N-linked (GlcNAc...) asparagine glycosylation occurs at Asn575. A Ca(2+)-binding site is contributed by Asp620. Asn644 carries N-linked (GlcNAc...) asparagine glycosylation.

This sequence belongs to the peptidase M10A family. In terms of assembly, interacts (via the C-terminal hemopexin-like domains-containing region) with the integrin alpha-V/beta-3; the interaction promotes vascular invasion in angiogenic vessels and melamoma cells. Interacts (via the C-terminal PEX domain) with TIMP2 (via the C-terminal); the interaction inhibits the degradation activity. Interacts with GSK3B. The cofactor is Ca(2+). It depends on Zn(2+) as a cofactor. Phosphorylation on multiple sites modulates enzymatic activity. Phosphorylated by PKC in vitro. In terms of processing, the propeptide is processed by MMP14 (MT-MMP1) and MMP16 (MT-MMP3). Autocatalytic cleavage in the C-terminal produces the anti-angiogenic peptide, PEX. This processing appears to be facilitated by binding integrinv/beta3.

The protein localises to the secreted. The protein resides in the extracellular space. It is found in the extracellular matrix. Its subcellular location is the membrane. It localises to the nucleus. The protein localises to the cytoplasm. The protein resides in the mitochondrion. The enzyme catalyses Cleavage of gelatin type I and collagen types IV, V, VII, X. Cleaves the collagen-like sequence Pro-Gln-Gly-|-Ile-Ala-Gly-Gln.. Functionally, ubiquitinous metalloproteinase that is involved in diverse functions such as remodeling of the vasculature, angiogenesis, tissue repair, tumor invasion, inflammation, and atherosclerotic plaque rupture. As well as degrading extracellular matrix proteins, can also act on several nonmatrix proteins such as big endothelial 1 and beta-type CGRP promoting vasoconstriction. Also cleaves KISS at a Gly-|-Leu bond. Appears to have a role in myocardial cell death pathways. Contributes to myocardial oxidative stress by regulating the activity of GSK3beta. Cleaves GSK3beta in vitro. Involved in the formation of the fibrovascular tissues. In terms of biological role, PEX, the C-terminal non-catalytic fragment of MMP2, possesses anti-angiogenic and anti-tumor properties and inhibits cell migration and cell adhesion to FGF2 and vitronectin. Ligand for integrin alpha-v/beta-3 on the surface of blood vessels. Mediates the proteolysis of CHUK/IKKA and initiates a primary innate immune response by inducing mitochondrial-nuclear stress signaling with activation of the pro-inflammatory NF-kappaB, NFAT and IRF transcriptional pathways. The polypeptide is 72 kDa type IV collagenase (Mmp2) (Mus musculus (Mouse)).